Here is a 495-residue protein sequence, read N- to C-terminus: Bile acid-sensitive ion channel (495 aa).

Positions 1–30 are binds the plasma membrane and stabilizes the channel in the closed state; that stretch reads MEHTEKSQVHAEKGLLGKIKRYLSKRPLPS. Over 1 to 61 the chain is Cytoplasmic; that stretch reads MEHTEKSQVH…NIAQNQNKVR (61 aa). Residues 62-82 traverse the membrane as a helical segment; that stretch reads KVIWLAVVLGSVSLLVWQIYS. Residues 83–459 lie on the Extracellular side of the membrane; it reads RLVNYFTWPT…GLFCGASLIT (377 aa). 6 cysteine pairs are disulfide-bonded: C112–C207, C185–C192, C298–C377, C315–C373, C328–C350, and C330–C342. N-linked (GlcNAc...) asparagine glycans are attached at residues N147, N163, and N179. N-linked (GlcNAc...) asparagine glycans are attached at residues N370, N405, and N421. Residues 454 to 456 carry the GAS motif; ion selectivity filter motif; sequence GAS. Residues 460 to 480 form a helical membrane-spanning segment; the sequence is IIEIIEYFFTNFYWVLIFFLL. Over 481–495 the chain is Cytoplasmic; it reads KILETIQRTSPPQAV.

Belongs to the amiloride-sensitive sodium channel (TC 1.A.6) family. ASIC5 subfamily. Forms homotrimeric channels. In terms of tissue distribution, expressed by cholangiocytes (at protein level). Detected in cerebellum, brainstem, kidney, liver, hepatocytes, lung, intestine and embryo. In the cerebellum, restricted to interneurons in the granular layer, specifically in GRM1-expressing unipolar brush cells of the vestibulocerebellum.

It localises to the apical cell membrane. The protein localises to the cell membrane. It carries out the reaction Na(+)(in) = Na(+)(out). The enzyme catalyses Li(+)(in) = Li(+)(out). The catalysed reaction is K(+)(in) = K(+)(out). It catalyses the reaction H(+)(in) = H(+)(out). Inhibited by the diuretic drug amiloride. Contrary to its rat ortholog it is not inhibited by Ca(2+). Forms bile acid-gated sodium channels and may play a role in bile acid-dependent absorption and secretion by epithelial cells of the bile ducts. Displays high selectivity for sodium ions but can also permit the permeation of other cations. The gating could be indirect and the consequence of alterations of the membrane environment of the channel by bile acids. As a sodium channel of type II unipolar brush cells of the vestibulocerebellum, controlling the electrical activity of these cells, could play a role in motor coordination and balance. This is Bile acid-sensitive ion channel from Mus musculus (Mouse).